We begin with the raw amino-acid sequence, 206 residues long: Transmembrane emp24 domain-containing protein bai (206 aa).

Positions 1-20 (MARAALIVCLLMACAWSSHA) are cleaved as a signal peptide. The Lumenal portion of the chain corresponds to 21–172 (VMFKLSPNTQ…RDTNEKTNSR (152 aa)). Positions 30–140 (QKCLKEDIQA…LKPLEVDLKR (111 aa)) constitute a GOLD domain. A helical membrane pass occupies residues 173 to 193 (VLFFSIFSMCCLLGLATWQVL). Topologically, residues 194–206 (YLRRYFKAKKLIE) are cytoplasmic.

This sequence belongs to the EMP24/GP25L family.

The protein localises to the membrane. Eca and bai are essential, though not redundant, for dorsoventral patterning of the embryo. Specifically required during early embryogenesis for the activity of maternal tkv, while the zygotic tkv is not affected. The sequence is that of Transmembrane emp24 domain-containing protein bai from Drosophila erecta (Fruit fly).